The following is a 104-amino-acid chain: MALKLRRNDSVVILTGKDKGKTGIIKNILSLNQVIVKGLNLIKKHQKPVPSQNKSGGIIEKEAPIHISNIAILNPESNKADRIGFRFEEGRKVRFFKSTGKTIQ.

The protein belongs to the universal ribosomal protein uL24 family. Part of the 50S ribosomal subunit.

Functionally, one of two assembly initiator proteins, it binds directly to the 5'-end of the 23S rRNA, where it nucleates assembly of the 50S subunit. One of the proteins that surrounds the polypeptide exit tunnel on the outside of the subunit. In Buchnera aphidicola subsp. Acyrthosiphon pisum (strain 5A), this protein is Large ribosomal subunit protein uL24.